The sequence spans 257 residues: Phosphonates import ATP-binding protein PhnC (257 aa).

Residues 4-248 (IEFKDVSKVY…VFNHIYGRSI (245 aa)) enclose the ABC transporter domain.

Belongs to the ABC transporter superfamily. Phosphonates importer (TC 3.A.1.9.1) family. As to quaternary structure, the complex is composed of two ATP-binding proteins (PhnC), two transmembrane proteins (PhnE) and a solute-binding protein (PhnD).

It is found in the cell membrane. It catalyses the reaction phosphonate(out) + ATP + H2O = phosphonate(in) + ADP + phosphate + H(+). Its function is as follows. Part of the ABC transporter complex PhnCDE involved in phosphonates import. Responsible for energy coupling to the transport system. The polypeptide is Phosphonates import ATP-binding protein PhnC (Staphylococcus epidermidis (strain ATCC 35984 / DSM 28319 / BCRC 17069 / CCUG 31568 / BM 3577 / RP62A)).